The sequence spans 779 residues: Angiomotin-like protein 2 (779 aa).

Disordered stretches follow at residues 41-215 and 263-308; these read GGAG…QYPH and QYLQ…TSGS. Basic and acidic residues-rich tracts occupy residues 100–112 and 141–152; these read KGEE…EAKA and RRQDEALRELRH. Residues 101 to 307 are required for interaction with CDH5; the sequence is GEELPTYEEA…SAQASSATSG (207 aa). Position 107 is a phosphotyrosine; by FGFR1 (Y107). Residues 160–169 are compositionally biased toward low complexity; the sequence is ERLLQLSLER. A compositionally biased stretch (polar residues) spans 177–193; that stretch reads HMSSSHSFPQLARNQQG. Residues 196–213 are compositionally biased toward pro residues; that stretch reads LRGPPAEGPESRGPPPQY. Residues 220–307 form a required for interaction with CDH1 region; that stretch reads HETTTAVTDP…SAQASSATSG (88 aa). The segment covering 298 to 308 has biased composition (low complexity); that stretch reads SAQASSATSGS. Positions 308–581 form a coiled coil; it reads SAHLAQMEAV…KYLEERAMRQ (274 aa). Glycyl lysine isopeptide (Lys-Gly) (interchain with G-Cter in ubiquitin) cross-links involve residues K347 and K408. Disordered regions lie at residues 522–543 and 679–753; these read RAQQ…SPEL and TQGW…GCSS. Over residues 530–539 the composition is skewed to gly residues; sequence APGGSSGSGG. Polar residues-rich tracts occupy residues 680-690 and 725-740; these read QGWQGLSSSER and DGST…TSTC. S759 and S762 each carry phosphoserine. A PDZ-binding motif is present at residues 776 to 779; that stretch reads EILI.

This sequence belongs to the angiomotin family. Part of a complex composed of AMOTL2, MAGI1 and CDH5, within the complex AMOTL2 acts as a scaffold protein for the interaction of MAGI1 with CDH5. The complex is required for coupling actin fibers to cell junctions in endothelial cells. Within the complex AMOTL2 (via its N-terminus) interacts with CDH5. Interacts (via N-terminus) with MAGI1. Interacts (via N-terminus) with ACTB; the interaction facilitates binding of cell junction complexes to actin fibers in endothelial cells. Interacts with CDH1; the interaction may facilitate binding of radial actin fibers to cell junction complexes. Interacts with SRC. Interacts with YAP1; the interaction is required for ubiquitination of AMOTL2 and localization of YAP1 to tight junctions. Interacts with WWP1; the interaction facilitates WWP1 interaction with the Crumbs complex and subsequent WWP1 translocation to the plasma membrane. WWP1 interaction with the Crumbs complex promotes WWP1 monoubiquitination of AMOTL2 which subsequently activates the Hippo signaling pathway. When ubiquitinated interacts with LATS2 (via UBA domain); the interaction promotes LATS2 phosphorylation of YAP1. Interacts (via PPXY motif) with WWTR1/TAZ (via WW domain); the interaction promotes WWTR1/TAZ localization to the cytoplasm and thereby inhibition of its transcriptional properties. Interacts with PHLDB2; interaction may facilitate PHLDB2 localization to the myotube podosome cortex that surrounds the core. Post-translationally, monoubiquitinated at Lys-347 and Lys-408 by Crumbs complex-bound WWP1. De-ubiquitinated at Lys-347 and Lys-408 by USP9X; the interaction may be promoted by cell contact inhibition. Deubiquitination of AMOTL2 negatively regulates Hippo signaling activation. Phosphorylation at Tyr-107 is necessary for efficient binding to SRC and synergistically functioning with SRC to activate the downstream MAPK pathway.

It localises to the recycling endosome. It is found in the cytoplasm. Its subcellular location is the cell projection. The protein localises to the podosome. The protein resides in the cell junction. Functionally, regulates the translocation of phosphorylated SRC to peripheral cell-matrix adhesion sites. Required for proper architecture of actin filaments. Plays a role in coupling actin fibers to cell junctions in endothelial cells and is therefore required for correct endothelial cell morphology via facilitating transcellular transmission of mechanical force resulting in endothelial cell elongation. Required for the anchoring of radial actin fibers to CDH1 junction complexes at the cell membrane which facilitates organization of radial actin fiber structure and cellular response to contractile forces. This contributes to maintenance of cell area, size, shape, epithelial sheet organization and trophectoderm cell properties that facilitate blastocyst zona hatching. Inhibits the Wnt/beta-catenin signaling pathway, probably by recruiting CTNNB1 to recycling endosomes and hence preventing its translocation to the nucleus. Participates in angiogenesis. Activates the Hippo signaling pathway in response to cell contact inhibition via interaction with and ubiquitination by Crumbs complex-bound WWP1. Ubiquitinated AMOTL2 then interacts with LATS2 which in turn phosphorylates YAP1, excluding it from the nucleus and localizing it to the cytoplasm and tight junctions, therefore ultimately repressing YAP1-driven transcription of target genes. Acts to inhibit WWTR1/TAZ transcriptional coactivator activity via sequestering WWTR1/TAZ in the cytoplasm and at tight junctions. Regulates the size and protein composition of the podosome cortex and core at myofibril neuromuscular junctions. Selectively promotes FGF-induced MAPK activation through SRC. May play a role in the polarity, proliferation and migration of endothelial cells. The polypeptide is Angiomotin-like protein 2 (Homo sapiens (Human)).